The primary structure comprises 325 residues: Aminotransferase tasG (325 aa).

Gly35 contacts substrate. Pyridoxal 5'-phosphate is bound by residues 89–90 (TW), Asn143, Tyr174, and 203–205 (SFA). Position 143 (Asn143) interacts with substrate. Lys206 is modified (N6-(pyridoxal phosphate)lysine). Arg214 serves as a coordination point for pyridoxal 5'-phosphate.

Belongs to the class-I pyridoxal-phosphate-dependent aminotransferase family. In terms of assembly, homodimer. Pyridoxal 5'-phosphate is required as a cofactor.

The protein operates within secondary metabolite biosynthesis. Aminotransferase; part of the gene cluster that mediates the biosynthesis of the tetramic acids Sch210971 and Sch210972, potential anti-HIV fungal natural product that contain a decalin core. The PKS module of tasS together with the enoylreductase tasC catalyze the formation of the polyketide unit which is then conjugated to 4-hydroxyl-4-methyl glutamate (HMG) by the condensation domain of the tasS NRPS module. One unique structural feature of Sch210971 and Sch210972 is the tetramic acid motif proposed to be derived from the non-proteinogenic amino acid HMG, by a Dieckmann-type condensation catalyzed by the reductase domain of tasS. The aldolase tasA catalyzes the aldol condensation of 2 molecules of pyruvic acid to yield the intermediate 4-hydroxyl-4-methyl-2-oxoglutarate (HMOG), which can then be stereoselectively transaminated, may be by tasG, to form HMG. The Diels-Alderase tas3 then uses the Dieckmann product of tasS as substrate and catalyzes the Diels-Alder cycloaddition to form the decalin ring of Sch210971 and Sch210972. This is Aminotransferase tasG from Hapsidospora irregularis.